Consider the following 313-residue polypeptide: Bifunctional oligoribonuclease and PAP phosphatase NrnA (313 aa).

Belongs to the NrnA oligoribonuclease family. Tetramer. Mn(2+) is required as a cofactor.

It carries out the reaction adenosine 3',5'-bisphosphate + H2O = AMP + phosphate. In terms of biological role, bifunctional enzyme which has both oligoribonuclease and pAp-phosphatase activities. Degrades RNA and DNA oligonucleotides with a length of 5 nucleotides and shorter, with a preference for 3-mers. Directionality is controversial; shown to degrade 5-mers and less in a 3' to 5' direction, and 11-mers in a 5' to 3' direction. Converts 3'(2')-phosphoadenosine 5'-phosphate (PAP) to AMP. In Bacillus subtilis (strain 168), this protein is Bifunctional oligoribonuclease and PAP phosphatase NrnA (nrnA).